A 424-amino-acid polypeptide reads, in one-letter code: MARQKQAAPIQRATSSELMHMLPDDLPQKHHNGANMGLANKDTTRDKVHEAADAPGLWQLAFCVAGIYASFLSWGVLQEAITTVSYPVHPPTAAEPEPEKERFTFSIVLNTIQSTFAAVTGFLYLYFSTPKGEKVPSIFPTRKIIFPLVLVSISSSLASPFGYASLAHIDYLTFILAKSCKLLPVMFLHLTIFRKRYPLYKYGVVLLVTLGVATFTLHHPGTSNKVAASATKGTSGSSAWGIFLLSINLLLDGLTNTTQDHVFSSPQLYTRFSGPQMMVAQNVLSTLLTSAYLLIMPHLSSTGILHAILPVPIPPSTETELTAAVSFLSRHPEVLKSVLGFAAFGAMGQLFIFYTLSQFSSLLLVTVTVTRKMLTMLLSVFWFGHSLSAGQWLGIGLVFGGIGAEAVVQRQEKKAKAAKAKKTE.

6 helical membrane passes run 57–77 (LWQL…WGVL), 107–127 (IVLN…YLYF), 144–164 (IIFP…FGYA), 173–193 (TFIL…LTIF), 197–217 (YPLY…TFTL), and 234–254 (TSGS…LDGL). N-linked (GlcNAc...) asparagine glycosylation is present at Asn256. The next 3 helical transmembrane spans lie at 293 to 313 (LLIM…PVPI), 337 to 357 (SVLG…YTLS), and 380 to 400 (VFWF…LVFG).

The protein belongs to the nucleotide-sugar transporter family. SLC35B subfamily.

Its subcellular location is the endoplasmic reticulum membrane. Functionally, may be involved in specific transport of UDP-Gal from the cytosol to the Golgi lumen. Involved in the maintenance of optimal conditions for the folding of secretory pathway proteins in the endoplasmic reticulum. The sequence is that of UDP-galactose transporter homolog 1 (hut1) from Emericella nidulans (strain FGSC A4 / ATCC 38163 / CBS 112.46 / NRRL 194 / M139) (Aspergillus nidulans).